The following is a 129-amino-acid chain: UPF0102 protein CT2262 (129 aa).

This sequence belongs to the UPF0102 family.

This Chlorobaculum tepidum (strain ATCC 49652 / DSM 12025 / NBRC 103806 / TLS) (Chlorobium tepidum) protein is UPF0102 protein CT2262.